A 425-amino-acid chain; its full sequence is Serine--tRNA ligase (425 aa).

Residue threonine 230–glutamate 232 participates in L-serine binding. Position 261 to 263 (arginine 261 to glutamate 263) interacts with ATP. Glutamate 284 is a binding site for L-serine. Glutamate 348 to serine 351 provides a ligand contact to ATP. Serine 384 contacts L-serine.

It belongs to the class-II aminoacyl-tRNA synthetase family. Type-1 seryl-tRNA synthetase subfamily. In terms of assembly, homodimer. The tRNA molecule binds across the dimer.

The protein resides in the cytoplasm. The catalysed reaction is tRNA(Ser) + L-serine + ATP = L-seryl-tRNA(Ser) + AMP + diphosphate + H(+). It catalyses the reaction tRNA(Sec) + L-serine + ATP = L-seryl-tRNA(Sec) + AMP + diphosphate + H(+). Its pathway is aminoacyl-tRNA biosynthesis; selenocysteinyl-tRNA(Sec) biosynthesis; L-seryl-tRNA(Sec) from L-serine and tRNA(Sec): step 1/1. Functionally, catalyzes the attachment of serine to tRNA(Ser). Is also able to aminoacylate tRNA(Sec) with serine, to form the misacylated tRNA L-seryl-tRNA(Sec), which will be further converted into selenocysteinyl-tRNA(Sec). This chain is Serine--tRNA ligase, found in Streptococcus sanguinis (strain SK36).